The chain runs to 359 residues: Chorismate synthase (359 aa).

NADP(+)-binding residues include Arg48 and Arg54. Residues 125–127, 243–244, Gly283, 298–302, and Arg324 each bind FMN; these read RSS, NA, and KPTSS.

Belongs to the chorismate synthase family. Homotetramer. The cofactor is FMNH2.

The catalysed reaction is 5-O-(1-carboxyvinyl)-3-phosphoshikimate = chorismate + phosphate. It participates in metabolic intermediate biosynthesis; chorismate biosynthesis; chorismate from D-erythrose 4-phosphate and phosphoenolpyruvate: step 7/7. In terms of biological role, catalyzes the anti-1,4-elimination of the C-3 phosphate and the C-6 proR hydrogen from 5-enolpyruvylshikimate-3-phosphate (EPSP) to yield chorismate, which is the branch point compound that serves as the starting substrate for the three terminal pathways of aromatic amino acid biosynthesis. This reaction introduces a second double bond into the aromatic ring system. The sequence is that of Chorismate synthase from Mannheimia succiniciproducens (strain KCTC 0769BP / MBEL55E).